The primary structure comprises 743 residues: Dystrobrevin alpha (743 aa).

An interaction with MAGEE1 region spans residues 1-288; sequence MIEDSGKRGN…SHSNQHQMKE (288 aa). Residues 238–294 form a ZZ-type zinc finger; sequence FHPVECSYCHSESMMGFRYRCQQCHNYQLCQDCFWRGHAGGSHSNQHQMKEYTSWKS. The Zn(2+) site is built by Cys243, Cys246, Cys258, Cys261, Cys267, Cys270, His280, and His284. Residues 400 to 450 form a syntrophin-binding region region; it reads DRLADEHVLIGLYVNMLRNNPSCMLESSNRLDEEHRLIARYAARLAAESSS. Residues 461 to 556 adopt a coiled-coil conformation; the sequence is DISFTIDANK…EGLMKLLKTQ (96 aa). The interval 556–575 is disordered; it reads QGAGSPRSSPSHTISRPIPM. A compositionally biased stretch (polar residues) spans 557 to 569; that stretch reads GAGSPRSSPSHTI. Ser662 is modified (phosphoserine).

The protein belongs to the dystrophin family. Dystrobrevin subfamily. In terms of assembly, interacts with dystrophin, utrophin and the syntrophins SNTA1, SNTB1, SNTB2, SNTG1 and SNTG2. Interacts with MAGEE1. Binds dystrobrevin binding protein 1. Interacts with CTNNAL1. The interaction is required for correct localization of both CTNNAL1 and DTNA. Does not interact with dystrophin. In terms of processing, phosphorylation of DTN-1 on tyrosine kinase substrate domain present in the C-terminus. In terms of tissue distribution, highly expressed in brain, skeletal and cardiac muscles, and expressed at lower levels in lung, liver and pancreas. Isoform 2 is not expressed in cardiac muscle. Isoform 7 and isoform 8 are only expressed in muscle.

Its subcellular location is the cytoplasm. The protein localises to the synapse. The protein resides in the cell membrane. Functionally, may be involved in the formation and stability of synapses as well as being involved in the clustering of nicotinic acetylcholine receptors. The polypeptide is Dystrobrevin alpha (Homo sapiens (Human)).